The following is a 342-amino-acid chain: Dihydroorotate dehydrogenase (quinone) (342 aa).

FMN contacts are provided by residues 60–64 (AGFDK) and threonine 84. Residue lysine 64 participates in substrate binding. Substrate is bound at residue 109–113 (NRMGF). FMN-binding residues include asparagine 137 and asparagine 170. Asparagine 170 provides a ligand contact to substrate. Serine 173 serves as the catalytic Nucleophile. Substrate is bound at residue asparagine 175. Residues lysine 215 and threonine 243 each coordinate FMN. 244 to 245 (NT) provides a ligand contact to substrate. FMN-binding positions include glycine 266, glycine 295, and 316-317 (YT).

It belongs to the dihydroorotate dehydrogenase family. Type 2 subfamily. As to quaternary structure, monomer. It depends on FMN as a cofactor.

The protein resides in the cell membrane. It catalyses the reaction (S)-dihydroorotate + a quinone = orotate + a quinol. The protein operates within pyrimidine metabolism; UMP biosynthesis via de novo pathway; orotate from (S)-dihydroorotate (quinone route): step 1/1. Its function is as follows. Catalyzes the conversion of dihydroorotate to orotate with quinone as electron acceptor. The sequence is that of Dihydroorotate dehydrogenase (quinone) from Halorhodospira halophila (strain DSM 244 / SL1) (Ectothiorhodospira halophila (strain DSM 244 / SL1)).